The chain runs to 393 residues: NAD(P)H-quinone oxidoreductase subunit H, chloroplastic (393 aa).

This sequence belongs to the complex I 49 kDa subunit family. In terms of assembly, NDH is composed of at least 16 different subunits, 5 of which are encoded in the nucleus.

It is found in the plastid. The protein localises to the chloroplast thylakoid membrane. It catalyses the reaction a plastoquinone + NADH + (n+1) H(+)(in) = a plastoquinol + NAD(+) + n H(+)(out). The enzyme catalyses a plastoquinone + NADPH + (n+1) H(+)(in) = a plastoquinol + NADP(+) + n H(+)(out). In terms of biological role, NDH shuttles electrons from NAD(P)H:plastoquinone, via FMN and iron-sulfur (Fe-S) centers, to quinones in the photosynthetic chain and possibly in a chloroplast respiratory chain. The immediate electron acceptor for the enzyme in this species is believed to be plastoquinone. Couples the redox reaction to proton translocation, and thus conserves the redox energy in a proton gradient. This chain is NAD(P)H-quinone oxidoreductase subunit H, chloroplastic, found in Lolium perenne (Perennial ryegrass).